Reading from the N-terminus, the 99-residue chain is Aspartyl/glutamyl-tRNA(Asn/Gln) amidotransferase subunit C (99 aa).

Belongs to the GatC family. In terms of assembly, heterotrimer of A, B and C subunits.

The catalysed reaction is L-glutamyl-tRNA(Gln) + L-glutamine + ATP + H2O = L-glutaminyl-tRNA(Gln) + L-glutamate + ADP + phosphate + H(+). It carries out the reaction L-aspartyl-tRNA(Asn) + L-glutamine + ATP + H2O = L-asparaginyl-tRNA(Asn) + L-glutamate + ADP + phosphate + 2 H(+). Functionally, allows the formation of correctly charged Asn-tRNA(Asn) or Gln-tRNA(Gln) through the transamidation of misacylated Asp-tRNA(Asn) or Glu-tRNA(Gln) in organisms which lack either or both of asparaginyl-tRNA or glutaminyl-tRNA synthetases. The reaction takes place in the presence of glutamine and ATP through an activated phospho-Asp-tRNA(Asn) or phospho-Glu-tRNA(Gln). The sequence is that of Aspartyl/glutamyl-tRNA(Asn/Gln) amidotransferase subunit C from Mycobacterium leprae (strain Br4923).